A 1806-amino-acid chain; its full sequence is Atrochrysone carboxylic acid synthase (1806 aa).

Residues 30 to 283 (DLQGLFRRLY…SLPVYSGLCH (254 aa)) are N-terminal acylcarrier protein transacylase domain (SAT). One can recognise a Ketosynthase family 3 (KS3) domain in the interval 416-850 (QSKIAIIGMS…GGNTTVCLEE (435 aa)). Catalysis depends on for beta-ketoacyl synthase activity residues Cys-589, His-725, and His-768. The tract at residues 951–1270 (FAFTGQGASY…SLTALHCAGV (320 aa)) is malonyl-CoA:ACP transacylase (MAT) domain. The segment at 1340–1659 (TSTVQQIIEE…RILLNRFFTA (320 aa)) is product template (PT) domain. The N-terminal hotdog fold stretch occupies residues 1344–1479 (QQIIEESFNG…ASILYDDAAL (136 aa)). Residues 1344 to 1654 (QQIIEESFNG…FRRYPRILLN (311 aa)) enclose the PKS/mFAS DH domain. The Proton acceptor; for dehydratase activity role is filled by His-1376. The C-terminal hotdog fold stretch occupies residues 1506–1654 (IANRFTRNMA…FRRYPRILLN (149 aa)). The active-site Proton donor; for dehydratase activity is Asp-1565. The tract at residues 1668-1726 (HAAASSTPAPRTKPEPVPVATPATAAAPVAQSPAAPASVTPAPAPAPAPGPTPAAAPAA) is disordered. The span at 1685–1708 (PVATPATAAAPVAQSPAAPASVTP) shows a compositional bias: low complexity. A compositionally biased stretch (pro residues) spans 1709–1721 (APAPAPAPGPTPA). The 78-residue stretch at 1728–1805 (GESDSVAAKA…DLRSWLLEYY (78 aa)) folds into the Carrier domain. Ser-1765 is subject to O-(pantetheine 4'-phosphoryl)serine.

The enzyme catalyses holo-[ACP] + 8 malonyl-CoA + 8 H(+) = atrochrysone carboxyl-[ACP] + 8 CO2 + 8 CoA + 2 H2O. Its pathway is secondary metabolite biosynthesis. Functionally, atrochrysone carboxylic acid synthase; part of the gene cluster that mediates the biosynthesis of monodictyphenone, a prenyl xanthone derivative. The pathway begins with the synthesis of atrochrysone thioester by the polyketide synthase (PKS) mdpG. The atrochrysone carboxyl ACP thioesterase mdpF then breaks the thioester bond and releases the atrochrysone carboxylic acid from mdpG. The atrochrysone carboxylic acid is then converted to atrochrysone which is further transformed into emodin anthrone. The next step is performed by the anthrone oxygenase mdpH that catalyzes the oxidation of emodinanthrone to emodin. Emodin is further modified to yield monodictyphenone via several steps involving mdpB, mdpC mdpJ, mdpK and mdpL. The short chain dehydrogenase mdpC converts the tautomers of emodin hydroquinone into the 3-hydroxy-3,4-dihydroan-thracen-1(2H)-one derivative. These enzymes with xptA, xptB and xptC are also proposed to be involved in the synthesis of shamixanthone from emodin. Especially, direct reduction of emodin by the short chain dehydrogenase mdpC followed by dehydration catalyzed by the scytalone dehydratase-like protein mdpB gives loss of oxygen and formation of chrysophanol intermediate in two simple steps. The protein is Atrochrysone carboxylic acid synthase of Emericella nidulans (strain FGSC A4 / ATCC 38163 / CBS 112.46 / NRRL 194 / M139) (Aspergillus nidulans).